The chain runs to 891 residues: Major core protein OPG136 precursor (891 aa).

The propeptide occupies S615–G697.

It belongs to the orthopxvirus protein OPG136 family. As to quaternary structure, interacts with P39/A4. The precursor is cleaved by OPG083 to give rise to the 62 kDa mature protein during virion maturation. Proteolytic cleavage of major core proteins OPG136, OPG129, and OPG098, which occurs at a late stage of core formation, is required for production of infectious mature virions (MV).

The protein resides in the virion. Functionally, core protein 4a is the most abundant virion protein. Major component of the virion core that undergoes proteolytic processing during the immature virion (IV) to mature virion (MV) transition. This Cynomys gunnisoni (Gunnison's prairie dog) protein is Major core protein OPG136 precursor (OPG136).